The sequence spans 61 residues: Hepcidin (61 aa).

The segment at 1 to 24 (LQVLTEEVGSIDSPVGEHQQPGGE) is disordered. A propeptide spanning residues 1–34 (LQVLTEEVGSIDSPVGEHQQPGGESMRLPEHFRF) is cleaved from the precursor. Cystine bridges form between cysteine 43-cysteine 59, cysteine 46-cysteine 49, cysteine 47-residue 55, and cysteine 50-cysteine 58.

Belongs to the hepcidin family.

The protein localises to the secreted. Functionally, seems to act as a signaling molecule involved in the maintenance of iron homeostasis. Seems to be required in conjunction with HFE to regulate both intestinal iron absorption and iron storage in macrophages. May also have antimicrobial activity. This chain is Hepcidin (hamp), found in Oncorhynchus mykiss (Rainbow trout).